Consider the following 530-residue polypeptide: Bifunctional purine biosynthesis protein PurH (530 aa).

Residues 1–148 (MEQARPIRRA…KNHKDVAIVV (148 aa)) enclose the MGS-like domain.

It belongs to the PurH family.

It carries out the reaction (6R)-10-formyltetrahydrofolate + 5-amino-1-(5-phospho-beta-D-ribosyl)imidazole-4-carboxamide = 5-formamido-1-(5-phospho-D-ribosyl)imidazole-4-carboxamide + (6S)-5,6,7,8-tetrahydrofolate. The catalysed reaction is IMP + H2O = 5-formamido-1-(5-phospho-D-ribosyl)imidazole-4-carboxamide. It functions in the pathway purine metabolism; IMP biosynthesis via de novo pathway; 5-formamido-1-(5-phospho-D-ribosyl)imidazole-4-carboxamide from 5-amino-1-(5-phospho-D-ribosyl)imidazole-4-carboxamide (10-formyl THF route): step 1/1. It participates in purine metabolism; IMP biosynthesis via de novo pathway; IMP from 5-formamido-1-(5-phospho-D-ribosyl)imidazole-4-carboxamide: step 1/1. The chain is Bifunctional purine biosynthesis protein PurH from Aeromonas hydrophila subsp. hydrophila (strain ATCC 7966 / DSM 30187 / BCRC 13018 / CCUG 14551 / JCM 1027 / KCTC 2358 / NCIMB 9240 / NCTC 8049).